The sequence spans 224 residues: ATP phosphoribosyltransferase (224 aa).

Belongs to the ATP phosphoribosyltransferase family. Short subfamily. As to quaternary structure, heteromultimer composed of HisG and HisZ subunits.

It localises to the cytoplasm. It catalyses the reaction 1-(5-phospho-beta-D-ribosyl)-ATP + diphosphate = 5-phospho-alpha-D-ribose 1-diphosphate + ATP. It functions in the pathway amino-acid biosynthesis; L-histidine biosynthesis; L-histidine from 5-phospho-alpha-D-ribose 1-diphosphate: step 1/9. Catalyzes the condensation of ATP and 5-phosphoribose 1-diphosphate to form N'-(5'-phosphoribosyl)-ATP (PR-ATP). Has a crucial role in the pathway because the rate of histidine biosynthesis seems to be controlled primarily by regulation of HisG enzymatic activity. The chain is ATP phosphoribosyltransferase from Cupriavidus necator (strain ATCC 17699 / DSM 428 / KCTC 22496 / NCIMB 10442 / H16 / Stanier 337) (Ralstonia eutropha).